We begin with the raw amino-acid sequence, 286 residues long: Putative thiosulfate sulfurtransferase (286 aa).

The Rhodanese 1 domain maps to 27–134 (DDPAYRLVEV…WVDNDYPTTD (108 aa)). Residues K162 and K166 each participate in a glycyl lysine isopeptide (Lys-Gly) (interchain with G-Cter in SAMP2) cross-link. One can recognise a Rhodanese 2 domain in the interval 164 to 283 (VDKGLPLVDV…WGNLVGAPVE (120 aa)). The active-site Cysteine persulfide intermediate is the C242. A substrate-binding site is contributed by R247.

It carries out the reaction thiosulfate + hydrogen cyanide = thiocyanate + sulfite + 2 H(+). Its function is as follows. May be a sulfotransferase involved in the formation of thiosulfate. The chain is Putative thiosulfate sulfurtransferase (tssA) from Haloferax volcanii (strain ATCC 29605 / DSM 3757 / JCM 8879 / NBRC 14742 / NCIMB 2012 / VKM B-1768 / DS2) (Halobacterium volcanii).